Consider the following 188-residue polypeptide: Peptidyl-tRNA hydrolase (188 aa).

Tyr16 is a binding site for tRNA. His21 acts as the Proton acceptor in catalysis. TRNA contacts are provided by Phe66, Asn68, and Asn114.

The protein belongs to the PTH family. As to quaternary structure, monomer.

The protein localises to the cytoplasm. The enzyme catalyses an N-acyl-L-alpha-aminoacyl-tRNA + H2O = an N-acyl-L-amino acid + a tRNA + H(+). Its function is as follows. Hydrolyzes ribosome-free peptidyl-tRNAs (with 1 or more amino acids incorporated), which drop off the ribosome during protein synthesis, or as a result of ribosome stalling. Catalyzes the release of premature peptidyl moieties from peptidyl-tRNA molecules trapped in stalled 50S ribosomal subunits, and thus maintains levels of free tRNAs and 50S ribosomes. The protein is Peptidyl-tRNA hydrolase of Citrifermentans bemidjiense (strain ATCC BAA-1014 / DSM 16622 / JCM 12645 / Bem) (Geobacter bemidjiensis).